The primary structure comprises 289 residues: Delta-sarcoglycan (289 aa).

Residues 1-35 (MPQEQYTHHRSTMPGSVGPQVYKVGIYGWRKRCLY) are Cytoplasmic-facing. Residues 36-56 (FFVLLLMILILVNLAMTIWIL) form a helical; Signal-anchor for type II membrane protein membrane-spanning segment. Topologically, residues 57-289 (KVMNFTIDGM…TCQINTSVCL (233 aa)) are extracellular. Residues N60 and N108 are each glycosylated (N-linked (GlcNAc...) asparagine). 2 disulfides stabilise this stretch: C263-C288 and C265-C281. N-linked (GlcNAc...) asparagine glycosylation occurs at N284.

The protein belongs to the sarcoglycan beta/delta/gamma/zeta family. In terms of assembly, interacts with FLNC and DAG1. Cross-link to form 2 major subcomplexes: one consisting of SGCB, SGCD and SGCG and the other consisting of SGCB and SGCD. The association between SGCB and SGCG is particularly strong while SGCA is loosely associated with the other sarcoglycans. Glycosylated. In terms of processing, disulfide bonds are present. As to expression, most strongly expressed in skeletal and cardiac muscle. Also detected in smooth muscle. Weak expression in brain and lung.

The protein resides in the cell membrane. The protein localises to the sarcolemma. It localises to the cytoplasm. It is found in the cytoskeleton. Component of the sarcoglycan complex, a subcomplex of the dystrophin-glycoprotein complex which forms a link between the F-actin cytoskeleton and the extracellular matrix. In Homo sapiens (Human), this protein is Delta-sarcoglycan (SGCD).